Here is a 72-residue protein sequence, read N- to C-terminus: Toxin Acra II-3 (72 aa).

The 64-residue stretch at 4-67 (PGNYPLDTRG…VWNAAKNYCK (64 aa)) folds into the LCN-type CS-alpha/beta domain. Cystine bridges form between Cys-18/Cys-41, Cys-27/Cys-46, and Cys-31/Cys-48.

Belongs to the long (3 C-C) scorpion toxin superfamily. Sodium channel inhibitor family. Beta subfamily. As to expression, expressed by the venom gland.

It is found in the secreted. Functionally, binds to sodium channels (Nav) and affects the channel activation process. The protein is Toxin Acra II-3 of Androctonus crassicauda (Arabian fat-tailed scorpion).